We begin with the raw amino-acid sequence, 125 residues long: Small ribosomal subunit protein uS13 (125 aa).

The interval 90–125 is disordered; it reads TRHRRGLPVRGQRTHTNARTKKGPRRAIAGKKKVTK.

The protein belongs to the universal ribosomal protein uS13 family. As to quaternary structure, part of the 30S ribosomal subunit. Forms a loose heterodimer with protein S19. Forms two bridges to the 50S subunit in the 70S ribosome.

Functionally, located at the top of the head of the 30S subunit, it contacts several helices of the 16S rRNA. In the 70S ribosome it contacts the 23S rRNA (bridge B1a) and protein L5 of the 50S subunit (bridge B1b), connecting the 2 subunits; these bridges are implicated in subunit movement. Contacts the tRNAs in the A and P-sites. The protein is Small ribosomal subunit protein uS13 of Gemmatimonas aurantiaca (strain DSM 14586 / JCM 11422 / NBRC 100505 / T-27).